The following is a 116-amino-acid chain: MNEKKQSRLRRAKSTRLHIRALGATRLCVNRTPRHIYAQVISADGGKVLAQASTLDASLRSGTTGNIEAATKVGALIAERAKAAGVTKVAFDRSGFKYHGRIKALADAAREGGLEF.

This sequence belongs to the universal ribosomal protein uL18 family. In terms of assembly, part of the 50S ribosomal subunit; part of the 5S rRNA/L5/L18/L25 subcomplex. Contacts the 5S and 23S rRNAs.

This is one of the proteins that bind and probably mediate the attachment of the 5S RNA into the large ribosomal subunit, where it forms part of the central protuberance. This Acinetobacter baumannii (strain AB307-0294) protein is Large ribosomal subunit protein uL18.